An 821-amino-acid chain; its full sequence is G-type lectin S-receptor-like serine/threonine-protein kinase SD2-5 (821 aa).

The first 21 residues, 1-21, serve as a signal peptide directing secretion; it reads MRGVFIVIVTCLVFLPDPLRA. The Extracellular segment spans residues 22–429; the sequence is GVASIGSITP…NGEDDGKHFP (408 aa). The region spanning 33 to 148 is the Bulb-type lectin domain; sequence FGGSQMNYIN…DGTSIWESFD (116 aa). Residues asparagine 51, asparagine 121, asparagine 174, and asparagine 248 are each glycosylated (N-linked (GlcNAc...) asparagine). Residues 280 to 314 form the EGF-like; atypical domain; the sequence is PSDLCGTPEPCGPYYVCSGSKVCGCVSGLSRARSD. Cystine bridges form between cysteine 284/cysteine 296 and cysteine 290/cysteine 302. The PAN domain maps to 323–411; it reads CKKTKDNATL…SGFVSYIKIA (89 aa). Asparagine 329, asparagine 370, and asparagine 380 each carry an N-linked (GlcNAc...) asparagine glycan. Disulfide bonds link cysteine 363/cysteine 385 and cysteine 367/cysteine 373. A helical membrane pass occupies residues 430–450; sequence YVVIIVVVTVFIIAVLIFVAF. Residues 451–821 lie on the Cytoplasmic side of the membrane; that stretch reads RIHKRKKMIL…LSAVRLSGPR (371 aa). In terms of domain architecture, Protein kinase spans 493-768; sequence NNFSVKLGQG…KVVQMLEGVF (276 aa). Residues 499–507 and lysine 521 contribute to the ATP site; that span reads LGQGGFGSV. The interval 581–599 is caM-binding; the sequence is KDGDVLLDWDTRFNIALGT. Aspartate 618 (proton acceptor) is an active-site residue. Serine 635 is modified (phosphoserine). The residue at position 652 (threonine 652) is a Phosphothreonine.

This sequence belongs to the protein kinase superfamily. Ser/Thr protein kinase family. In terms of assembly, interacts with PUB9, PUB13, PUB14 and PUB29.

The protein resides in the membrane. It carries out the reaction L-seryl-[protein] + ATP = O-phospho-L-seryl-[protein] + ADP + H(+). The enzyme catalyses L-threonyl-[protein] + ATP = O-phospho-L-threonyl-[protein] + ADP + H(+). The protein is G-type lectin S-receptor-like serine/threonine-protein kinase SD2-5 (SD25) of Arabidopsis thaliana (Mouse-ear cress).